Consider the following 276-residue polypeptide: Undecaprenyl-diphosphatase 2 (276 aa).

The next 8 membrane-spanning stretches (helical) occupy residues 4–24 (IEALLFAVIQGVSELFPVSSL), 44–64 (DFLPFMVMLHLGTAAALLIYF), 87–107 (ARLMWLVIAGTLPAGLLGLLL), 114–134 (LFASTTAVLVFLALNGLLLLW), 150–170 (LSFAGAIKIGAGQALALLPGF), 193–213 (FSFLLATPIITAAGLLEIPKL), 225–245 (LLLACGAVSGLCAYASTWFLM), and 256–276 (LRPFGFYCLLVGVVGLLFKLV).

Belongs to the UppP family.

Its subcellular location is the cell inner membrane. The catalysed reaction is di-trans,octa-cis-undecaprenyl diphosphate + H2O = di-trans,octa-cis-undecaprenyl phosphate + phosphate + H(+). Catalyzes the dephosphorylation of undecaprenyl diphosphate (UPP). Confers resistance to bacitracin. The sequence is that of Undecaprenyl-diphosphatase 2 from Chromobacterium violaceum (strain ATCC 12472 / DSM 30191 / JCM 1249 / CCUG 213 / NBRC 12614 / NCIMB 9131 / NCTC 9757 / MK).